The following is a 132-amino-acid chain: Fatty acid-binding protein 12 (132 aa).

A fatty acid contacts are provided by residues Arg-107 and 127–129 (RTY).

It belongs to the calycin superfamily. Fatty-acid binding protein (FABP) family. In terms of tissue distribution, highly expressed in adult retina and testis.

May play a role in lipid transport. The protein is Fatty acid-binding protein 12 (Fabp12) of Mus musculus (Mouse).